The primary structure comprises 299 residues: Lipoyl synthase (299 aa).

Residues cysteine 34, cysteine 39, cysteine 45, cysteine 60, cysteine 64, cysteine 67, and serine 273 each contribute to the [4Fe-4S] cluster site. In terms of domain architecture, Radical SAM core spans tryptophan 46–leucine 262.

This sequence belongs to the radical SAM superfamily. Lipoyl synthase family. [4Fe-4S] cluster is required as a cofactor.

Its subcellular location is the cytoplasm. The enzyme catalyses [[Fe-S] cluster scaffold protein carrying a second [4Fe-4S](2+) cluster] + N(6)-octanoyl-L-lysyl-[protein] + 2 oxidized [2Fe-2S]-[ferredoxin] + 2 S-adenosyl-L-methionine + 4 H(+) = [[Fe-S] cluster scaffold protein] + N(6)-[(R)-dihydrolipoyl]-L-lysyl-[protein] + 4 Fe(3+) + 2 hydrogen sulfide + 2 5'-deoxyadenosine + 2 L-methionine + 2 reduced [2Fe-2S]-[ferredoxin]. Its pathway is protein modification; protein lipoylation via endogenous pathway; protein N(6)-(lipoyl)lysine from octanoyl-[acyl-carrier-protein]: step 2/2. In terms of biological role, catalyzes the radical-mediated insertion of two sulfur atoms into the C-6 and C-8 positions of the octanoyl moiety bound to the lipoyl domains of lipoate-dependent enzymes, thereby converting the octanoylated domains into lipoylated derivatives. The sequence is that of Lipoyl synthase from Ehrlichia canis (strain Jake).